Here is an 82-residue protein sequence, read N- to C-terminus: MKLTCMMIVAVLFLTAWTLVMADDSNNGLANHFSKSRDEMEDPEASKLEKRACRKKWEYCIVPIIGFIYCCPGLICGPFVCV.

The signal sequence occupies residues 1–22 (MKLTCMMIVAVLFLTAWTLVMA). Residues 23-49 (DDSNNGLANHFSKSRDEMEDPEASKLE) constitute a propeptide that is removed on maturation. 3 cysteine pairs are disulfide-bonded: C53–C71, C60–C76, and C70–C81.

As to expression, expressed by the venom duct.

It is found in the secreted. Its function is as follows. MuO-conotoxins are gating-modifier toxins that inhibit sodium current by trapping the domain II voltage sensor in the closed position to prevent opening of the sodium channel. This toxin inhibits rNav1.2/SCN2A (IC(50)=532 nM), rNav1.4/SCN4A (IC(50)=438 nM) and rNav1.7/SCN9A (IC(50)=345 nM). It blocks Nav channels by interacting mainly with the C-terminal part of the pore loop of domain-3. It does not bind on site 1. At small concentration, this toxin also acts as a calcium current agonist, whereas at higher doses it blocks fast-inactivating calcium current. The sequence is that of Mu-conotoxin MrVIA from Conus marmoreus (Marble cone).